Here is a 364-residue protein sequence, read N- to C-terminus: Probable dual-specificity RNA methyltransferase RlmN (364 aa).

Glu-107 acts as the Proton acceptor in catalysis. One can recognise a Radical SAM core domain in the interval 113–346 (HEYGNSVCVT…ATIRREQGAD (234 aa)). The cysteines at positions 120 and 351 are disulfide-linked. Positions 127, 131, and 134 each coordinate [4Fe-4S] cluster. S-adenosyl-L-methionine is bound by residues 177 to 178 (GE), Ser-209, 232 to 234 (SLH), and Asn-308. Cys-351 (S-methylcysteine intermediate) is an active-site residue.

The protein belongs to the radical SAM superfamily. RlmN family. [4Fe-4S] cluster is required as a cofactor.

The protein resides in the cytoplasm. The catalysed reaction is adenosine(2503) in 23S rRNA + 2 reduced [2Fe-2S]-[ferredoxin] + 2 S-adenosyl-L-methionine = 2-methyladenosine(2503) in 23S rRNA + 5'-deoxyadenosine + L-methionine + 2 oxidized [2Fe-2S]-[ferredoxin] + S-adenosyl-L-homocysteine. The enzyme catalyses adenosine(37) in tRNA + 2 reduced [2Fe-2S]-[ferredoxin] + 2 S-adenosyl-L-methionine = 2-methyladenosine(37) in tRNA + 5'-deoxyadenosine + L-methionine + 2 oxidized [2Fe-2S]-[ferredoxin] + S-adenosyl-L-homocysteine. In terms of biological role, specifically methylates position 2 of adenine 2503 in 23S rRNA and position 2 of adenine 37 in tRNAs. Confers resistance to some classes of antibiotics. The sequence is that of Probable dual-specificity RNA methyltransferase RlmN from Staphylococcus saprophyticus subsp. saprophyticus (strain ATCC 15305 / DSM 20229 / NCIMB 8711 / NCTC 7292 / S-41).